We begin with the raw amino-acid sequence, 86 residues long: Small ribosomal subunit protein bS18c (86 aa).

It belongs to the bacterial ribosomal protein bS18 family. Part of the 30S ribosomal subunit.

The protein resides in the plastid. It is found in the chloroplast. This Larix laricina (Tamarack) protein is Small ribosomal subunit protein bS18c.